Consider the following 96-residue polypeptide: Dynein light chain roadblock-type 1 (96 aa).

At Ala-2 the chain carries N-acetylalanine.

It belongs to the GAMAD family. In terms of assembly, homodimer. The cytoplasmic dynein 1 complex consists of two catalytic heavy chains (HCs) and a number of non-catalytic subunits presented by intermediate chains (ICs), light intermediate chains (LICs) and light chains (LCs); the composition seems to vary in respect to the IC, LIC and LC composition. The heavy chain homodimer serves as a scaffold for the probable homodimeric assembly of the respective non-catalytic subunits. The ICs and LICs bind directly to the HC dimer and the LCs assemble on the IC dimer. Interacts with DYNLRB2. Interacts with DYNC1I1 and DYNC1I2. Interacts with RAB6A isoform 1 (GTP-bound); the interaction is direct. Interacts with RAB6A isoform 2 (GDP-bound); the interaction is direct. Interacts with RAB6B (GDP-bound).

The protein resides in the cytoplasm. The protein localises to the cytoskeleton. Its function is as follows. Acts as one of several non-catalytic accessory components of the cytoplasmic dynein 1 complex that are thought to be involved in linking dynein to cargos and to adapter proteins that regulate dynein function. Cytoplasmic dynein 1 acts as a motor for the intracellular retrograde motility of vesicles and organelles along microtubules. The polypeptide is Dynein light chain roadblock-type 1 (Dynlrb1) (Mus musculus (Mouse)).